A 527-amino-acid polypeptide reads, in one-letter code: T-complex protein 1 subunit beta (527 aa).

At Ser2 the chain carries N-acetylserine.

This sequence belongs to the TCP-1 chaperonin family. As to quaternary structure, heterooligomeric complex of about 850 to 900 kDa that forms two stacked rings, 12 to 16 nm in diameter. Interacts with PLP2; this interaction leads to inhibition of CCT complex mediated actin folding.

It localises to the cytoplasm. Molecular chaperone; assists the folding of proteins upon ATP hydrolysis. Known to play a role, in vitro, in the folding of actin and tubulin. In yeast may play a role in mitotic spindle formation. The chain is T-complex protein 1 subunit beta (CCT2) from Saccharomyces cerevisiae (strain ATCC 204508 / S288c) (Baker's yeast).